Reading from the N-terminus, the 269-residue chain is Surfeit locus protein 4 (269 aa).

The next 5 helical transmembrane spans lie at L65 to L85, Y92 to W112, F179 to F199, L203 to W223, and T242 to M262. The Di-lysine motif signature appears at K266–W269.

It belongs to the SURF4 family. As to quaternary structure, found in a complex composed at least of SURF4, TMED2 and TMED10. May interact with LMAN1. Interacts with ZFYVE27 and with KIF5A in a ZFYVE27-dependent manner. Interacts with STING1. Interacts with SAR1B. Interacts with TMEM41B.

It is found in the endoplasmic reticulum membrane. It localises to the endoplasmic reticulum-Golgi intermediate compartment membrane. The protein localises to the golgi apparatus membrane. Endoplasmic reticulum cargo receptor that mediates the export of lipoproteins by recruiting cargos into COPII vesicles to facilitate their secretion. Acts as a cargo receptor for lipoproteins bearing both APOB and APOA1, thereby regulating lipoprotein delivery and the maintenance of lipid homeostasis. Synergizes with the GTPase SAR1B to mediate transport of circulating lipoproteins. Promotes the secretion of PCSK9. Also mediates the efficient secretion of erythropoietin (EPO). May also play a role in the maintenance of the architecture of the endoplasmic reticulum-Golgi intermediate compartment and of the Golgi. This chain is Surfeit locus protein 4, found in Mus musculus (Mouse).